A 180-amino-acid chain; its full sequence is NADH-quinone oxidoreductase subunit I (180 aa).

4Fe-4S ferredoxin-type domains follow at residues 48-80 (IVLT…LQKA) and 90-119 (EFFR…LTPD). Residues Cys60, Cys63, Cys66, Cys70, Cys99, Cys102, Cys105, and Cys109 each contribute to the [4Fe-4S] cluster site.

It belongs to the complex I 23 kDa subunit family. NDH-1 is composed of 13 different subunits. Subunits NuoA, H, J, K, L, M, N constitute the membrane sector of the complex. [4Fe-4S] cluster is required as a cofactor.

It localises to the cell inner membrane. The enzyme catalyses a quinone + NADH + 5 H(+)(in) = a quinol + NAD(+) + 4 H(+)(out). Its function is as follows. NDH-1 shuttles electrons from NADH, via FMN and iron-sulfur (Fe-S) centers, to quinones in the respiratory chain. The immediate electron acceptor for the enzyme in this species is believed to be ubiquinone. Couples the redox reaction to proton translocation (for every two electrons transferred, four hydrogen ions are translocated across the cytoplasmic membrane), and thus conserves the redox energy in a proton gradient. The chain is NADH-quinone oxidoreductase subunit I from Edwardsiella ictaluri (strain 93-146).